The following is an 84-amino-acid chain: Exodeoxyribonuclease 7 small subunit (84 aa).

It belongs to the XseB family. As to quaternary structure, heterooligomer composed of large and small subunits.

It localises to the cytoplasm. The catalysed reaction is Exonucleolytic cleavage in either 5'- to 3'- or 3'- to 5'-direction to yield nucleoside 5'-phosphates.. Its function is as follows. Bidirectionally degrades single-stranded DNA into large acid-insoluble oligonucleotides, which are then degraded further into small acid-soluble oligonucleotides. This Yersinia pseudotuberculosis serotype O:3 (strain YPIII) protein is Exodeoxyribonuclease 7 small subunit.